A 237-amino-acid chain; its full sequence is Putative glutathione-dependent formaldehyde-activating enzyme (237 aa).

The CENP-V/GFA domain occupies 38 to 152 (ITLICHCPPS…LGQSGGSEGE (115 aa)). Zn(2+)-binding residues include cysteine 42, cysteine 44, cysteine 67, cysteine 69, cysteine 72, cysteine 114, and cysteine 117.

Belongs to the Gfa family. The cofactor is Zn(2+).

It carries out the reaction S-(hydroxymethyl)glutathione = glutathione + formaldehyde. The protein operates within one-carbon metabolism; formaldehyde degradation; formate from formaldehyde (glutathione route): step 1/3. Functionally, catalyzes the condensation of formaldehyde and glutathione to S-hydroxymethylglutathione. This is Putative glutathione-dependent formaldehyde-activating enzyme from Sordaria macrospora (strain ATCC MYA-333 / DSM 997 / K(L3346) / K-hell).